A 330-amino-acid chain; its full sequence is ATP-dependent Clp protease proteolytic subunit-related protein 3, chloroplastic (330 aa).

The N-terminal 43 residues, 1–43, are a transit peptide targeting the chloroplast; it reads MASCLQASMNSLLPRSSSFSPHPPLSSNSSGRRNLKTFRYAFR. The segment at 7–32 is disordered; that stretch reads ASMNSLLPRSSSFSPHPPLSSNSSGR. Residues 8-30 are compositionally biased toward low complexity; that stretch reads SMNSLLPRSSSFSPHPPLSSNSS.

Belongs to the peptidase S14 family. In terms of assembly, component of the chloroplastic Clp protease core complex which consist of at least 16 proteins: CLPP4 (3 copies), CLPP5 (3 copies), CLPR4 (2 copies), ClpP1 (1 copy), CLPP6 (1 copy), CLPR2 (1 copy), CLPT1 (1 copy), CLPT2 (1 copy) and 3 copies of CLPP3 and/or CLPR1 and/or CLPR3. The core complex is organized in two heptameric rings, one containing CLPP3,4,5,6 in a 1:2:3:1 ratio and the other CLPP1 and CLPR1,2,3,4 in a 3:1:1:1:1 ratio.

It localises to the plastid. The protein resides in the chloroplast. The sequence is that of ATP-dependent Clp protease proteolytic subunit-related protein 3, chloroplastic from Arabidopsis thaliana (Mouse-ear cress).